The following is a 312-amino-acid chain: Retinol dehydrogenase 8 (312 aa).

9–18 (LISGCSSGIG) contacts NADP(+). 3 helical membrane passes run 87–107 (VLVN…SLAA), 138–158 (IVVV…VYAA), and 170–190 (LAVQ…GPVV). Substrate is bound at residue serine 143. Residue tyrosine 156 is the Proton acceptor of the active site.

It belongs to the short-chain dehydrogenases/reductases (SDR) family. Detected in photoreceptor outer segments in the retina (at protein level).

The protein resides in the membrane. The catalysed reaction is all-trans-retinol + NADP(+) = all-trans-retinal + NADPH + H(+). Functionally, retinol dehydrogenase with a clear preference for NADP. Converts all-trans-retinal to all-trans-retinol. May play a role in the regeneration of visual pigment at high light intensity. This Bos taurus (Bovine) protein is Retinol dehydrogenase 8 (RDH8).